Reading from the N-terminus, the 143-residue chain is D-aminoacyl-tRNA deacylase (143 aa).

Positions 135-136 (GP) match the Gly-cisPro motif, important for rejection of L-amino acids motif.

The protein belongs to the DTD family. In terms of assembly, homodimer.

The protein resides in the cytoplasm. It catalyses the reaction glycyl-tRNA(Ala) + H2O = tRNA(Ala) + glycine + H(+). It carries out the reaction a D-aminoacyl-tRNA + H2O = a tRNA + a D-alpha-amino acid + H(+). Its function is as follows. An aminoacyl-tRNA editing enzyme that deacylates mischarged D-aminoacyl-tRNAs. Also deacylates mischarged glycyl-tRNA(Ala), protecting cells against glycine mischarging by AlaRS. Acts via tRNA-based rather than protein-based catalysis; rejects L-amino acids rather than detecting D-amino acids in the active site. By recycling D-aminoacyl-tRNA to D-amino acids and free tRNA molecules, this enzyme counteracts the toxicity associated with the formation of D-aminoacyl-tRNA entities in vivo and helps enforce protein L-homochirality. This chain is D-aminoacyl-tRNA deacylase, found in Mycolicibacterium gilvum (strain PYR-GCK) (Mycobacterium gilvum (strain PYR-GCK)).